Reading from the N-terminus, the 1390-residue chain is Contactin (1390 aa).

The N-terminal stretch at 1–18 (MLAKIGLLASILVLNLVG) is a signal peptide. Positions 25 to 67 (SENLPDPDPQSGQQPQNYQPSYNKDYSPRYNPLYTGQQSADPN) are disordered. Positions 58 to 67 (YTGQQSADPN) are enriched in polar residues. 6 Ig-like C2-type domains span residues 362-463 (PYFV…AHLN), 468-561 (MEFN…LRVT), 576-656 (PKVF…IYIN), 661-745 (PQFT…TSFS), 756-843 (PSFK…ARVI), and 848-939 (IRFI…TSVS). A glycan (N-linked (GlcNAc...) asparagine) is linked at Asn-369. 4 disulfide bridges follow: Cys-388-Cys-446, Cys-489-Cys-540, Cys-593-Cys-640, and Cys-682-Cys-734. Asn-537, Asn-604, Asn-629, Asn-691, and Asn-774 each carry an N-linked (GlcNAc...) asparagine glycan. Intrachain disulfides connect Cys-779–Cys-827 and Cys-870–Cys-923. Residues Asn-912, Asn-986, and Asn-991 are each glycosylated (N-linked (GlcNAc...) asparagine). Fibronectin type-III domains are found at residues 946–1048 (APGG…TYED), 1053–1151 (APRN…SAED), 1156–1254 (APQK…TYRK), and 1259–1357 (PPSS…MGKT). Asn-1166, Asn-1171, and Asn-1307 each carry an N-linked (GlcNAc...) asparagine glycan. Ala-1362 carries the GPI-anchor amidated alanine lipid modification. Residues 1363 to 1390 (NTRHGHNINTALILSTLLLISTFLYTSQ) constitute a propeptide, removed in mature form.

Belongs to the immunoglobulin superfamily. Contactin family. As to quaternary structure, forms a complex with Nrg and Nrx. Forms a complex composed of septa junction proteins Nrx-IV/Nrx, Tsf2/MTf, Cont and Nrg during late embryogenesis. N-glycosylated. As to expression, expressed in ectodermally derived epithelial cells from stage 12. All these tissues, such as epidermis, hindgut, foregut, salivary glands and trachea, which contain pleated septate junctions. Expressed by ectodermally derived epithelial cells and along peripheral nerves. Not present in midline glial cells. Expressed in epithelial cells and glial cells of peripheral nerves.

The protein resides in the cell membrane. Its subcellular location is the cell junction. It localises to the septate junction. Functionally, required for organization of septate junctions and paracellular barrier functions. Septate junctions, which are the equivalent of vertebrates tight junctions, are characterized by regular arrays of transverse structures that span the intermembrane space and form a physical barrier to diffusion. The protein is Contactin (Cont) of Drosophila melanogaster (Fruit fly).